Here is a 290-residue protein sequence, read N- to C-terminus: Bifunctional protein FolD (290 aa).

NADP(+) contacts are provided by residues 169 to 171 (GAS), Ile-194, and Ile-235.

Belongs to the tetrahydrofolate dehydrogenase/cyclohydrolase family. As to quaternary structure, homodimer.

It carries out the reaction (6R)-5,10-methylene-5,6,7,8-tetrahydrofolate + NADP(+) = (6R)-5,10-methenyltetrahydrofolate + NADPH. The catalysed reaction is (6R)-5,10-methenyltetrahydrofolate + H2O = (6R)-10-formyltetrahydrofolate + H(+). It participates in one-carbon metabolism; tetrahydrofolate interconversion. Catalyzes the oxidation of 5,10-methylenetetrahydrofolate to 5,10-methenyltetrahydrofolate and then the hydrolysis of 5,10-methenyltetrahydrofolate to 10-formyltetrahydrofolate. This is Bifunctional protein FolD from Helicobacter pylori (strain J99 / ATCC 700824) (Campylobacter pylori J99).